The sequence spans 341 residues: Tryptophan--tRNA ligase (341 aa).

ATP-binding positions include 11 to 13 (RPT) and 19 to 20 (GH). The 'HIGH' region motif lies at 12–20 (PTGKLHIGH). Residue aspartate 140 participates in L-tryptophan binding. ATP is bound by residues 152–154 (GND), leucine 194, and 202–206 (KMSKS). The 'KMSKS' region motif lies at 202–206 (KMSKS).

Belongs to the class-I aminoacyl-tRNA synthetase family. As to quaternary structure, homodimer.

The protein localises to the cytoplasm. The enzyme catalyses tRNA(Trp) + L-tryptophan + ATP = L-tryptophyl-tRNA(Trp) + AMP + diphosphate + H(+). Functionally, catalyzes the attachment of tryptophan to tRNA(Trp). The chain is Tryptophan--tRNA ligase from Lactococcus lactis subsp. lactis (strain IL1403) (Streptococcus lactis).